Here is a 242-residue protein sequence, read N- to C-terminus: C-reactive protein 1.1 (242 aa).

The first 24 residues, 1 to 24, serve as a signal peptide directing secretion; sequence MKTFHGPTCGTAVSLCLLLFLTSA. A Pentraxin (PTX) domain is found at 30 to 241; sequence ITSKVKFPPS…GVVLSPNEIC (212 aa). The phosphocholine site is built by threonine 60 and tyrosine 63. Disulfide bonds link cysteine 62/cysteine 125 and cysteine 112/cysteine 144. Ca(2+) contacts are provided by aspartate 85 and asparagine 86. Asparagine 147 carries N-linked (GlcNAc...) asparagine glycosylation. The Ca(2+) site is built by glutamine 169, aspartate 170, and glutamine 180. Cysteine 207 and cysteine 241 form a disulfide bridge.

It belongs to the pentraxin family. In terms of assembly, homopentamer. Pentraxin (or pentaxin) have a discoid arrangement of 5 non-covalently bound subunits. The cofactor is Ca(2+).

The protein localises to the secreted. Functionally, might serve the role of immunoglobulins. The sequence is that of C-reactive protein 1.1 from Limulus polyphemus (Atlantic horseshoe crab).